Reading from the N-terminus, the 457-residue chain is MEIFPISLKLQQQRCLIVGGGHIAYRKAILLVKAGAILDIVAPDIDPQLMSLIEQSAGTAYVKLFEDHDLDRVYRLVIAATDNADVNKRVFEQAELRNLLVNSVDDIPNCRFMVPAIIDRSPLLISVASNGASPVLSRQLRTQIETLVPHGMGKLAEFSGQWRSRVKAQITNPDERRIFWEELYASPLKEQVFNDNLDIANQMMTQSLAEWTAPKGEVYLVGAGPGDPELLTLKALRLMQQADVVIYDRLVSAPILELCRRDAEKVYVGKARSNHSVPQEGINALLVKYAQAGKRVCRLKGGDPFIFGRGGEEIQELFAAGIPFQVVPGITAASGCSAYAGIPLTHRDYAQSVRFLTGHLKEGSPELPWSELVYENQTLVLYMGLVGLEHICQQLIAHGQRPDMPVALVSKGTTPEQKVVVGTLSNIASKIAEYQIHAPTLTIIGEVVSLREQLQWL.

The interval M1–M204 is precorrin-2 dehydrogenase /sirohydrochlorin ferrochelatase. NAD(+) is bound by residues H22–I23 and P43–D44. A Phosphoserine modification is found at S129. The interval G216–L457 is uroporphyrinogen-III C-methyltransferase. P225 serves as a coordination point for S-adenosyl-L-methionine. The active-site Proton acceptor is D248. K270 functions as the Proton donor in the catalytic mechanism. S-adenosyl-L-methionine-binding positions include G301 to D303, I306, T331 to A332, M383, and G412.

The protein in the N-terminal section; belongs to the precorrin-2 dehydrogenase / sirohydrochlorin ferrochelatase family. This sequence in the C-terminal section; belongs to the precorrin methyltransferase family.

The enzyme catalyses uroporphyrinogen III + 2 S-adenosyl-L-methionine = precorrin-2 + 2 S-adenosyl-L-homocysteine + H(+). It catalyses the reaction precorrin-2 + NAD(+) = sirohydrochlorin + NADH + 2 H(+). It carries out the reaction siroheme + 2 H(+) = sirohydrochlorin + Fe(2+). It functions in the pathway cofactor biosynthesis; adenosylcobalamin biosynthesis; precorrin-2 from uroporphyrinogen III: step 1/1. The protein operates within cofactor biosynthesis; adenosylcobalamin biosynthesis; sirohydrochlorin from precorrin-2: step 1/1. Its pathway is porphyrin-containing compound metabolism; siroheme biosynthesis; precorrin-2 from uroporphyrinogen III: step 1/1. It participates in porphyrin-containing compound metabolism; siroheme biosynthesis; siroheme from sirohydrochlorin: step 1/1. It functions in the pathway porphyrin-containing compound metabolism; siroheme biosynthesis; sirohydrochlorin from precorrin-2: step 1/1. Functionally, multifunctional enzyme that catalyzes the SAM-dependent methylations of uroporphyrinogen III at position C-2 and C-7 to form precorrin-2 via precorrin-1. Then it catalyzes the NAD-dependent ring dehydrogenation of precorrin-2 to yield sirohydrochlorin. Finally, it catalyzes the ferrochelation of sirohydrochlorin to yield siroheme. The sequence is that of Siroheme synthase from Acinetobacter baylyi (strain ATCC 33305 / BD413 / ADP1).